The sequence spans 406 residues: Cysteine desulfurase (406 aa).

Position 226 is an N6-(pyridoxal phosphate)lysine (K226). Residue C364 is the Cysteine persulfide intermediate of the active site.

This sequence belongs to the class-V pyridoxal-phosphate-dependent aminotransferase family. Csd subfamily. Homodimer. Interacts with SufE and the SufBCD complex composed of SufB, SufC and SufD. The interaction with SufE is required to mediate the direct transfer of the sulfur atom from the S-sulfanylcysteine. The cofactor is pyridoxal 5'-phosphate.

Its subcellular location is the cytoplasm. The catalysed reaction is (sulfur carrier)-H + L-cysteine = (sulfur carrier)-SH + L-alanine. It catalyses the reaction L-selenocysteine + AH2 = hydrogenselenide + L-alanine + A + H(+). It functions in the pathway cofactor biosynthesis; iron-sulfur cluster biosynthesis. Functionally, cysteine desulfurases mobilize the sulfur from L-cysteine to yield L-alanine, an essential step in sulfur metabolism for biosynthesis of a variety of sulfur-containing biomolecules. Component of the suf operon, which is activated and required under specific conditions such as oxidative stress and iron limitation. Acts as a potent selenocysteine lyase in vitro, that mobilizes selenium from L-selenocysteine. Selenocysteine lyase activity is however unsure in vivo. The polypeptide is Cysteine desulfurase (Escherichia coli (strain K12 / MC4100 / BW2952)).